Reading from the N-terminus, the 559-residue chain is Hepatocyte nuclear factor 1-beta (559 aa).

The interval 1 to 31 is dimerization; it reads MVSKLTSLQQELLSALLSSGVTKEVLVQALE. The region spanning 1–32 is the HNF-p1 domain; it reads MVSKLTSLQQELLSALLSSGVTKEVLVQALEE. Phosphoserine occurs at positions 49, 52, 75, and 80. The 96-residue stretch at 93 to 188 folds into the POU-specific atypical domain; the sequence is KELQALNTEE…ILRQFNQTVQ (96 aa). A DNA-binding region (homeobox; HNF1-type) is located at residues 231-312; the sequence is MRRNRFKWGP…RRKEEEAFRQ (82 aa). Residues 328 to 341 show a composition bias toward low complexity; sequence NTLLSHSSPHHQPS. The interval 328–371 is disordered; it reads NTLLSHSSPHHQPSTSPPNKLPGVRYNQQGNNEVTSSSTISHHG. Residues 353-371 show a composition bias toward polar residues; it reads YNQQGNNEVTSSSTISHHG.

It belongs to the HNF1 homeobox family. In terms of assembly, binds DNA as a dimer. Can form homodimer or heterodimer with HNF1-alpha. Interacts (via HNF-p1 domain) with PCBD1; the interaction increases its transactivation activity.

It localises to the nucleus. Its function is as follows. Transcription factor that binds to the inverted palindrome 5'-GTTAATNATTAAC-3'. Binds to the FPC element in the cAMP regulatory unit of the PLAU gene. Transcriptional activity is increased by coactivator PCBD1. This is Hepatocyte nuclear factor 1-beta (HNF1B) from Sus scrofa (Pig).